A 252-amino-acid polypeptide reads, in one-letter code: Ditrans,polycis-undecaprenyl-diphosphate synthase ((2E,6E)-farnesyl-diphosphate specific) (252 aa).

D25 is an active-site residue. D25 provides a ligand contact to Mg(2+). Residues 26–29, W30, R38, H42, and 70–72 contribute to the substrate site; these read GNGR and SSE. The active-site Proton acceptor is N73. Residues W74, R76, and R193 each contribute to the substrate site. Residue H198 coordinates Mg(2+). 199–201 lines the substrate pocket; sequence RIS. E212 serves as a coordination point for Mg(2+).

Belongs to the UPP synthase family. Homodimer. Mg(2+) is required as a cofactor.

The catalysed reaction is 8 isopentenyl diphosphate + (2E,6E)-farnesyl diphosphate = di-trans,octa-cis-undecaprenyl diphosphate + 8 diphosphate. Its function is as follows. Catalyzes the sequential condensation of isopentenyl diphosphate (IPP) with (2E,6E)-farnesyl diphosphate (E,E-FPP) to yield (2Z,6Z,10Z,14Z,18Z,22Z,26Z,30Z,34E,38E)-undecaprenyl diphosphate (di-trans,octa-cis-UPP). UPP is the precursor of glycosyl carrier lipid in the biosynthesis of bacterial cell wall polysaccharide components such as peptidoglycan and lipopolysaccharide. The polypeptide is Ditrans,polycis-undecaprenyl-diphosphate synthase ((2E,6E)-farnesyl-diphosphate specific) (Salmonella typhi).